The chain runs to 511 residues: MSIYSKFTINDVLLNKESLQKKNKYTCPICFELIYKKSIYQCSSGHYACQECWEKSLEIKQECMICRCKVKSFKNLSRCLVIEQNFSKKECNCIYSFHLDYFIDGANQENEDEENEDEENEDDEDENEDEENGEDDEDKDEDEENENENEENKDEENEKRKLIKDEENGCKEIINVDQLDRHIQNCKFKFVKCSHIGCDRVLRLNSLKEHENQCGFKLVKCEYCACDGIIQVQLENHYDECPKFVIGCPQGCLNFFERDQIKSHIENDCNNSTIQCKYYEYGCKVEMKRSELQRHLENVNHQLFMGKLIDKLSSTLDQSMKIQELLLKEIEKSKITCSELQRKNDELSSLITEIDDNYFNKNDFINSWKLTSQGYTNKWIISNYSNLVENTPHPEYIYSPSFDIVSREFVISIYPNGSLTGKDHLSLFLHNNNEDPNKLEFTLELVNLLDKSKSITRKGLEVFEEIERKGWSKFLASKLINKKNGWLSDDDKLTINIYVKILYDDIEPLES.

Residues 27–67 (CPICFELIYKKSIYQCSSGHYACQECWEKSLEIKQECMICR) form an RING-type; degenerate zinc finger. The stretch at 103–169 (IDGANQENED…RKLIKDEENG (67 aa)) forms a coiled coil. Positions 107–159 (NQENEDEENEDEENEDDEDENEDEENGEDDEDKDEDEENENENEENKDEENEK) are disordered. Residues 109–155 (ENEDEENEDEENEDDEDENEDEENGEDDEDKDEDEENENENEENKDE) show a composition bias toward acidic residues. 2 consecutive TRAF-type zinc fingers follow at residues 181–234 (RHIQ…QVQL) and 236–293 (NHYD…SELQ). A coiled-coil region spans residues 324–358 (ELLLKEIEKSKITCSELQRKNDELSSLITEIDDNY). Positions 374-499 (GYTNKWIISN…DDKLTINIYV (126 aa)) constitute an MATH domain.

This sequence belongs to the TNF receptor-associated factor family. A subfamily.

Its subcellular location is the cytoplasm. Probable adapter protein and signal transducer that links members of the tumor necrosis factor receptor family to different signaling pathways by association with the receptor cytoplasmic domain and kinases. In Dictyostelium discoideum (Social amoeba), this protein is TNF receptor-associated factor family protein DDB_G0290931.